The sequence spans 437 residues: Adenylosuccinate lyase (437 aa).

N(6)-(1,2-dicarboxyethyl)-AMP contacts are provided by residues Arg-4–Tyr-5, Lys-70–Asp-72, and Thr-96–Ser-97. His-144 functions as the Proton donor/acceptor in the catalytic mechanism. Gln-215 contributes to the N(6)-(1,2-dicarboxyethyl)-AMP binding site. The active-site Proton donor/acceptor is Ser-265. N(6)-(1,2-dicarboxyethyl)-AMP contacts are provided by residues Ser-266, Lys-271–Asn-273, and Ser-310–Val-314.

The protein belongs to the lyase 1 family. Adenylosuccinate lyase subfamily. In terms of assembly, homooligomer. Residues from neighboring subunits contribute catalytic and substrate-binding residues to each active site.

It carries out the reaction N(6)-(1,2-dicarboxyethyl)-AMP = fumarate + AMP. It catalyses the reaction (2S)-2-[5-amino-1-(5-phospho-beta-D-ribosyl)imidazole-4-carboxamido]succinate = 5-amino-1-(5-phospho-beta-D-ribosyl)imidazole-4-carboxamide + fumarate. It participates in purine metabolism; AMP biosynthesis via de novo pathway; AMP from IMP: step 2/2. Its pathway is purine metabolism; IMP biosynthesis via de novo pathway; 5-amino-1-(5-phospho-D-ribosyl)imidazole-4-carboxamide from 5-amino-1-(5-phospho-D-ribosyl)imidazole-4-carboxylate: step 2/2. In terms of biological role, catalyzes two reactions in de novo purine nucleotide biosynthesis. Catalyzes the breakdown of 5-aminoimidazole- (N-succinylocarboxamide) ribotide (SAICAR or 2-[5-amino-1-(5-phospho-beta-D-ribosyl)imidazole-4-carboxamido]succinate) to 5-aminoimidazole-4-carboxamide ribotide (AICAR or 5-amino-1-(5-phospho-beta-D-ribosyl)imidazole-4-carboxamide) and fumarate, and of adenylosuccinate (ADS or N(6)-(1,2-dicarboxyethyl)-AMP) to adenosine monophosphate (AMP) and fumarate. The polypeptide is Adenylosuccinate lyase (purB) (Aquifex aeolicus (strain VF5)).